Consider the following 507-residue polypeptide: Chromosomal replication initiator protein DnaA (507 aa).

The interval 1-112 (MTDDPGSGFT…PATDEADDTT (112 aa)) is domain I, interacts with DnaA modulators. Residues 99–162 (RIAPPATDEA…ERPRNTDSAT (64 aa)) form a disordered region. The span at 113–127 (VPPSENPATTSPDTT) shows a compositional bias: polar residues. A domain II region spans residues 113–166 (VPPSENPATTSPDTTTDNDEIDDSAAARGDNQHSWPSYFTERPRNTDSATAGVT). The domain III, AAA+ region stretch occupies residues 167-383 (SLNRRYTFDT…GALIRVTAFA (217 aa)). ATP-binding residues include G211, G213, K214, and T215. The interval 384–507 (SLNKTPIDKA…TTRIRQRSKR (124 aa)) is domain IV, binds dsDNA.

The protein belongs to the DnaA family. In terms of assembly, oligomerizes as a right-handed, spiral filament on DNA at oriC.

Its subcellular location is the cytoplasm. Functionally, plays an essential role in the initiation and regulation of chromosomal replication. ATP-DnaA binds to the origin of replication (oriC) to initiate formation of the DNA replication initiation complex once per cell cycle. Binds the DnaA box (a 9 base pair repeat at the origin) and separates the double-stranded (ds)DNA. Forms a right-handed helical filament on oriC DNA; dsDNA binds to the exterior of the filament while single-stranded (ss)DNA is stabiized in the filament's interior. The ATP-DnaA-oriC complex binds and stabilizes one strand of the AT-rich DNA unwinding element (DUE), permitting loading of DNA polymerase. After initiation quickly degrades to an ADP-DnaA complex that is not apt for DNA replication. Binds acidic phospholipids. In Mycobacterium bovis (strain ATCC BAA-935 / AF2122/97), this protein is Chromosomal replication initiator protein DnaA.